Consider the following 833-residue polypeptide: Phenylalanine--tRNA ligase beta subunit (833 aa).

Residues 42 to 157 (ADLKGPLAVG…PEYEVGTDAI (116 aa)) form the tRNA-binding domain. Residues 411-485 (SAPHTITIPA…RLEGYENLPS (75 aa)) enclose the B5 domain. Mg(2+) contacts are provided by Asp-463, Asp-469, Glu-472, and Glu-473. An FDX-ACB domain is found at 739-832 (STFPVATQDV…AAERTGAALR (94 aa)).

Belongs to the phenylalanyl-tRNA synthetase beta subunit family. Type 1 subfamily. In terms of assembly, tetramer of two alpha and two beta subunits. The cofactor is Mg(2+).

It is found in the cytoplasm. It carries out the reaction tRNA(Phe) + L-phenylalanine + ATP = L-phenylalanyl-tRNA(Phe) + AMP + diphosphate + H(+). In Streptomyces avermitilis (strain ATCC 31267 / DSM 46492 / JCM 5070 / NBRC 14893 / NCIMB 12804 / NRRL 8165 / MA-4680), this protein is Phenylalanine--tRNA ligase beta subunit.